Reading from the N-terminus, the 573-residue chain is Probable pectinesterase/pectinesterase inhibitor 41 (573 aa).

Residues 1–22 (MLSLKLFLVTLFLSLQTLFIAS) form the signal peptide. Positions 25-184 (LLPSNSSSTI…TKLFSVSLAL (160 aa)) are pectinesterase inhibitor 41. 7 N-linked (GlcNAc...) asparagine glycosylation sites follow: Asn29, Asn119, Asn173, Asn264, Asn268, Asn281, and Asn320. The interval 259–557 (VTVNQNGTGN…FTVENFLLGD (299 aa)) is pectinesterase 41. Residue Thr336 coordinates substrate. Asn353 carries an N-linked (GlcNAc...) asparagine glycan. Position 366 (Gln366) interacts with substrate. The Proton donor; for pectinesterase activity role is filled by Asp389. Cys403 and Cys423 are disulfide-bonded. Asp410 serves as the catalytic Nucleophile; for pectinesterase activity. N-linked (GlcNAc...) asparagine glycosylation is found at Asn456 and Asn469. Residues Arg478 and Trp480 each contribute to the substrate site. Asn520, Asn541, and Asn547 each carry an N-linked (GlcNAc...) asparagine glycan.

It in the N-terminal section; belongs to the PMEI family. This sequence in the C-terminal section; belongs to the pectinesterase family. As to expression, expressed in flowers, siliques, floral stems and rosettes leaves.

It is found in the secreted. It localises to the cell wall. It carries out the reaction [(1-&gt;4)-alpha-D-galacturonosyl methyl ester](n) + n H2O = [(1-&gt;4)-alpha-D-galacturonosyl](n) + n methanol + n H(+). It functions in the pathway glycan metabolism; pectin degradation; 2-dehydro-3-deoxy-D-gluconate from pectin: step 1/5. Acts in the modification of cell walls via demethylesterification of cell wall pectin. The polypeptide is Probable pectinesterase/pectinesterase inhibitor 41 (PME41) (Arabidopsis thaliana (Mouse-ear cress)).